A 526-amino-acid chain; its full sequence is Protein ERGIC-53-like (526 aa).

The N-terminal stretch at 1-25 (MPAVSGPGPLFCLLLLLLDPHSPET) is a signal peptide. Over 26–462 (GCPPLRRFEY…QPPRASSCLQ (437 aa)) the chain is Lumenal. Positions 31–252 (RRFEYKLSFK…DVLSFLTFSL (222 aa)) constitute an L-type lectin-like domain. An N-linked (GlcNAc...) asparagine glycan is attached at Asn75. A disulfide bridge links Cys176 with Cys215. The chain crosses the membrane as a helical span at residues 463–483 (PGIFLFYLLIQTVGFFGYVHF). The Cytoplasmic portion of the chain corresponds to 484–526 (RQELNKSLQECLSTGSLPLGPAPHTPRALGILRRQPLPASMPA).

In terms of tissue distribution, highly expressed in normal and neoplastic prostate. Also expressed in cardiac atrium, salivary gland, spleen and selective cells in the CNS.

The protein resides in the endoplasmic reticulum-Golgi intermediate compartment membrane. The chain is Protein ERGIC-53-like (LMAN1L) from Homo sapiens (Human).